The chain runs to 550 residues: Dihydroxy-acid dehydratase (550 aa).

A Mg(2+)-binding site is contributed by Asp78. Residue Cys119 participates in [2Fe-2S] cluster binding. Residues Asp120 and Lys121 each coordinate Mg(2+). N6-carboxylysine is present on Lys121. A [2Fe-2S] cluster-binding site is contributed by Cys191. Glu440 serves as a coordination point for Mg(2+). Residue Ser466 is the Proton acceptor of the active site.

Belongs to the IlvD/Edd family. As to quaternary structure, homodimer. [2Fe-2S] cluster is required as a cofactor. It depends on Mg(2+) as a cofactor.

It carries out the reaction (2R)-2,3-dihydroxy-3-methylbutanoate = 3-methyl-2-oxobutanoate + H2O. The catalysed reaction is (2R,3R)-2,3-dihydroxy-3-methylpentanoate = (S)-3-methyl-2-oxopentanoate + H2O. The protein operates within amino-acid biosynthesis; L-isoleucine biosynthesis; L-isoleucine from 2-oxobutanoate: step 3/4. It participates in amino-acid biosynthesis; L-valine biosynthesis; L-valine from pyruvate: step 3/4. Functionally, functions in the biosynthesis of branched-chain amino acids. Catalyzes the dehydration of (2R,3R)-2,3-dihydroxy-3-methylpentanoate (2,3-dihydroxy-3-methylvalerate) into 2-oxo-3-methylpentanoate (2-oxo-3-methylvalerate) and of (2R)-2,3-dihydroxy-3-methylbutanoate (2,3-dihydroxyisovalerate) into 2-oxo-3-methylbutanoate (2-oxoisovalerate), the penultimate precursor to L-isoleucine and L-valine, respectively. This chain is Dihydroxy-acid dehydratase, found in Methanococcus maripaludis (strain DSM 14266 / JCM 13030 / NBRC 101832 / S2 / LL).